The chain runs to 120 residues: NAD(P)H-quinone oxidoreductase subunit 3, chloroplastic (120 aa).

The next 3 membrane-spanning stretches (helical) occupy residues Ile9–Gly29, Met64–Met84, and Val88–Ser108.

It belongs to the complex I subunit 3 family. In terms of assembly, NDH is composed of at least 16 different subunits, 5 of which are encoded in the nucleus.

It is found in the plastid. The protein localises to the chloroplast thylakoid membrane. The enzyme catalyses a plastoquinone + NADH + (n+1) H(+)(in) = a plastoquinol + NAD(+) + n H(+)(out). It carries out the reaction a plastoquinone + NADPH + (n+1) H(+)(in) = a plastoquinol + NADP(+) + n H(+)(out). NDH shuttles electrons from NAD(P)H:plastoquinone, via FMN and iron-sulfur (Fe-S) centers, to quinones in the photosynthetic chain and possibly in a chloroplast respiratory chain. The immediate electron acceptor for the enzyme in this species is believed to be plastoquinone. Couples the redox reaction to proton translocation, and thus conserves the redox energy in a proton gradient. The chain is NAD(P)H-quinone oxidoreductase subunit 3, chloroplastic from Piper cenocladum (Ant piper).